A 1943-amino-acid polypeptide reads, in one-letter code: Beta-L-arabinobiosidase (1943 aa).

The tat-type signal signal peptide spans 1 to 32; it reads MHHSTRKRWLASIGAVAAVATLATGGAVTAQA. 2 F5/8 type C domains span residues 892–1049 and 1142–1302; these read TNVD…AYNT and SKEI…AYAI. In terms of domain architecture, PKD spans 1061–1157; sequence TPQVDAYVSS…HGIPSDGTVN (97 aa). 3 consecutive FIVAR domains span residues 1678-1716, 1746-1790, and 1823-1864; these read ANGL…EQVA, DAAK…AAVQ, and QAKK…VDAA. Residues 1875–1906 form a disordered region; sequence TKVEQKPGSQQPGVTDTDKDDKDNKGDRVPPT. The span at 1890-1902 shows a compositional bias: basic and acidic residues; sequence DTDKDDKDNKGDR. Residues 1908–1928 traverse the membrane as a helical segment; the sequence is AAVSVVAAAAVLLTAAGVTIL.

The protein belongs to the glycosyl hydrolase 121 family. Post-translationally, predicted to be exported by the Tat system. The position of the signal peptide cleavage has not been experimentally proven.

It localises to the membrane. It carries out the reaction 4-O-(beta-L-arabinofuranosyl-(1-&gt;2)-beta-L-arabinofuranosyl-(1-&gt;2)-beta-L-arabinofuranosyl)-(2S,4S)-4-hydroxyproline + H2O = 4-O-(beta-L-arabinofuranosyl)-(2S,4S)-4-hydroxyproline + beta-L-arabinofuranosyl-(1-&gt;2)-beta-L-arabinofuranose. Functionally, beta-L-arabinobiosidase that removes L-arabinofuranose-beta-1,2-L-arabinofuranose disaccharide from various substrates such as carrot extensin and potato lectin. Also acts on L-arabinofuranose (Ara)-beta-1,2-Ara-beta-1,2-Ara-beta-Hyp (Ara(3)-Hyp) but not on Ara-beta-1,3-Ara-beta-1,2-Ara-beta-1,2-Ara-beta--Hyp (Ara(4)-Hyp) or Ara-beta-1,2-Ara-beta-Hyp (Ara(2)-Hyp), suggesting a specificity for unmodified Ara(3)-Hyp substrate. In the presence of 1-alkanols, shows transglycosylation activity, retaining the anomeric configuration of the arabinofuranose residue. This Bifidobacterium longum subsp. longum (strain ATCC 15707 / DSM 20219 / JCM 1217 / NCTC 11818 / E194b) protein is Beta-L-arabinobiosidase (hypBA2).